Reading from the N-terminus, the 706-residue chain is mRNA (2'-O-methyladenosine-N(6)-)-methyltransferase (706 aa).

The tract at residues 1-34 (MANENHGSPREGASLLSHSPGTSSQSQPCSPKPV) is disordered. Residues 16–29 (LSHSPGTSSQSQPC) show a composition bias toward polar residues. Position 30 is a phosphoserine (serine 30). One can recognise a WW domain in the interval 43–77 (ELVHAGWEKCWSRRESRPYYFNRFTNQSLWEMPVL). Positions 88 to 148 (GLNATPLPQD…QSVPSSPSIP (61 aa)) are disordered. A Nuclear localization signal motif is present at residues 109-113 (KSRKR). A Phosphoserine modification is found at serine 116. The span at 132-147 (IPVTPTSQSVPSSPSI) shows a compositional bias: low complexity. Threonine 152 is modified (phosphothreonine). Residues arginine 234 and arginine 264 each coordinate substrate. An S-adenosyl-L-methionine-binding site is contributed by 552–555 (NPPF). Residues glutamate 557 and 587–591 (WREPP) each bind substrate. 613–615 (FEH) is an S-adenosyl-L-methionine binding site. A disordered region spans residues 663–706 (TAAYKQSGRSHGSSSSSSSSSSSSEAKDRDSGREQGPSREPHPT). The short motif at 668 to 686 (QSGRSHGSSSSSSSSSSSS) is the Nuclear localization signal element. The span at 675 to 686 (SSSSSSSSSSSS) shows a compositional bias: low complexity. The segment covering 687 to 706 (EAKDRDSGREQGPSREPHPT) has biased composition (basic and acidic residues).

This sequence belongs to the CAPAM family. In terms of assembly, interacts with POLR2A; interacts with the phosphorylated C-terminal domain (CTD) of POLR2A.

The protein localises to the nucleus. It catalyses the reaction a 5'-end (N(7)-methyl 5'-triphosphoguanosine)-(2'-O-methyladenosine) in mRNA + S-adenosyl-L-methionine = a 5'-end (N(7)-methyl 5'-triphosphoguanosine)-(N(6),2'-O-dimethyladenosine) in mRNA + S-adenosyl-L-homocysteine + H(+). Cap-specific adenosine methyltransferase activity is inhibited by zinc. Cap-specific adenosine methyltransferase that catalyzes formation of N(6),2'-O-dimethyladenosine cap (m6A(m)) by methylating the adenosine at the second transcribed position of capped mRNAs. Recruited to the early elongation complex of RNA polymerase II (RNAPII) via interaction with POLR2A and mediates formation of m6A(m) co-transcriptionally. The chain is mRNA (2'-O-methyladenosine-N(6)-)-methyltransferase from Mus musculus (Mouse).